Here is a 321-residue protein sequence, read N- to C-terminus: Cytochrome c biogenesis protein CcsA (321 aa).

The next 7 helical transmembrane spans lie at 9-29 (ILTH…LITL), 44-64 (GMIA…ASSG), 68-88 (LSNL…LHMI), 143-163 (MLLS…LLMI), 226-246 (VISL…VWAN), 260-274 (TWAF…IYLH), and 289-309 (VASI…LLGI).

This sequence belongs to the CcmF/CycK/Ccl1/NrfE/CcsA family. In terms of assembly, may interact with Ccs1.

The protein resides in the plastid. It is found in the chloroplast thylakoid membrane. Functionally, required during biogenesis of c-type cytochromes (cytochrome c6 and cytochrome f) at the step of heme attachment. This is Cytochrome c biogenesis protein CcsA from Oryza sativa subsp. indica (Rice).